The following is a 258-amino-acid chain: uncharacterized protein (258 aa).

Solcar repeat units lie at residues 9–78 (KPIL…AKAR), 81–160 (PGVR…FKKK), and 165–246 (DHVF…VKSH). Helical transmembrane passes span 11–31 (ILVG…LSTI), 53–73 (GLSS…FVYE), 87–107 (LVSA…AEVV), 139–159 (MCGR…QFKK), 171–191 (PKGA…LDVI), and 218–239 (FEKG…YLGT).

Belongs to the mitochondrial carrier (TC 2.A.29) family.

It is found in the mitochondrion inner membrane. This is an uncharacterized protein from Schizosaccharomyces pombe (strain 972 / ATCC 24843) (Fission yeast).